Consider the following 211-residue polypeptide: MHISMFDFSIYIKFFVSLCALVNPIGMIPIFTTMTNHQSHLERKKTNLVANFSAFIILLISLFAGNSILNAFGISINSFRIAGGILIISIAFSMISGKFTKNNKTSKEKNQENISVVPLAMPLIAGPGAISSTIVWSTYYSTWSDFLGCSIAIFLFAFVCWLCFRAAPCVVEILGKTGINIITRIMGLLLMSLGIEFLSIGIKSIFSALLH.

Helical transmembrane passes span 14–34 (FFVSLCALVNPIGMIPIFTTM), 54–74 (AFIILLISLFAGNSILNAFGI), 76–96 (INSFRIAGGILIISIAFSMIS), 116–136 (VVPLAMPLIAGPGAISSTIVW), 144–164 (SDFLGCSIAIFLFAFVCWLCF), and 185–205 (IMGLLLMSLGIEFLSIGIKSI).

Belongs to the UPF0056 (MarC) family.

Its subcellular location is the cell membrane. The chain is UPF0056 membrane protein BUsg_257 from Buchnera aphidicola subsp. Schizaphis graminum (strain Sg).